Consider the following 351-residue polypeptide: DNA nickase (351 aa).

The Fe cation site is built by His-241, Glu-245, and His-303.

Its function is as follows. Acts as a DNA nickase. This Nostoc sp. (strain PCC 7120 / SAG 25.82 / UTEX 2576) protein is DNA nickase.